The primary structure comprises 364 residues: Paraneoplastic antigen Ma2 (364 aa).

Alanine 2 carries the N-acetylalanine modification. Acidic residues predominate over residues 335–351 (EEEEASFENESIEEPEE). A disordered region spans residues 335–364 (EEEEASFENESIEEPEERDGYGRWNHEGDD). Residues 352–364 (RDGYGRWNHEGDD) are compositionally biased toward basic and acidic residues.

Belongs to the PNMA family. Brain-specific. In some cancer patients, specifically expressed by testicular tumor cells.

The protein localises to the nucleus. It is found in the nucleolus. The sequence is that of Paraneoplastic antigen Ma2 (PNMA2) from Homo sapiens (Human).